Reading from the N-terminus, the 219-residue chain is Mucosal pentraxin (219 aa).

An N-terminal signal peptide occupies residues 1–19 (MEKLIVGTLLLTVLSGGIS). One can recognise a Pentraxin (PTX) domain in the interval 24-219 (DGKAFIFPQE…YVVTKPKLWT (196 aa)). The cysteines at positions 55 and 114 are disulfide-linked. 6 residues coordinate Ca(2+): D77, N78, E155, Q156, D157, and Q167.

The protein belongs to the pentraxin family. Homopentamer. Pentraxin (or pentaxin) have a discoid arrangement of 5 non-covalently bound subunits. It depends on Ca(2+) as a cofactor. In terms of tissue distribution, expression is restricted to small intestine, stomach and colon. Within colon, expressed in epithelial cells located within the lower to mid region of transverse and distal crypts, but not in proximal colon.

The protein localises to the secreted. The protein is Mucosal pentraxin (Mptx1) of Rattus norvegicus (Rat).